We begin with the raw amino-acid sequence, 86 residues long: Anti-adapter protein IraP (86 aa).

Residues 1–42 (MKNLIAELLVKLAQKEEESKELVAQVEALEIVVTALLRQMAQ) adopt a coiled-coil conformation.

It belongs to the IraP family. As to quaternary structure, interacts with RssB.

The protein localises to the cytoplasm. In terms of biological role, inhibits RpoS proteolysis by regulating RssB activity, thereby increasing the stability of the sigma stress factor RpoS especially during phosphate starvation, but also in stationary phase and during nitrogen starvation. Its effect on RpoS stability is due to its interaction with RssB, which probably blocks the interaction of RssB with RpoS, and the consequent delivery of the RssB-RpoS complex to the ClpXP protein degradation pathway. The protein is Anti-adapter protein IraP of Enterobacter sp. (strain 638).